We begin with the raw amino-acid sequence, 141 residues long: Large ribosomal subunit protein uL11 (141 aa).

This sequence belongs to the universal ribosomal protein uL11 family. Part of the ribosomal stalk of the 50S ribosomal subunit. Interacts with L10 and the large rRNA to form the base of the stalk. L10 forms an elongated spine to which L12 dimers bind in a sequential fashion forming a multimeric L10(L12)X complex. In terms of processing, one or more lysine residues are methylated.

In terms of biological role, forms part of the ribosomal stalk which helps the ribosome interact with GTP-bound translation factors. This is Large ribosomal subunit protein uL11 from Petrotoga mobilis (strain DSM 10674 / SJ95).